Consider the following 257-residue polypeptide: Pyridoxine 5'-phosphate synthase (257 aa).

Asn6 contributes to the 3-amino-2-oxopropyl phosphate binding site. 8 to 9 lines the 1-deoxy-D-xylulose 5-phosphate pocket; that stretch reads DH. Arg17 contributes to the 3-amino-2-oxopropyl phosphate binding site. The Proton acceptor role is filled by His42. 1-deoxy-D-xylulose 5-phosphate-binding residues include Arg44 and His49. The Proton acceptor role is filled by Glu69. Position 99 (Thr99) interacts with 1-deoxy-D-xylulose 5-phosphate. The active-site Proton donor is the His211. 3-amino-2-oxopropyl phosphate contacts are provided by residues Gly212 and 233-234; that span reads GQ.

Belongs to the PNP synthase family. As to quaternary structure, homooctamer; tetramer of dimers.

The protein resides in the cytoplasm. The enzyme catalyses 3-amino-2-oxopropyl phosphate + 1-deoxy-D-xylulose 5-phosphate = pyridoxine 5'-phosphate + phosphate + 2 H2O + H(+). Its pathway is cofactor biosynthesis; pyridoxine 5'-phosphate biosynthesis; pyridoxine 5'-phosphate from D-erythrose 4-phosphate: step 5/5. In terms of biological role, catalyzes the complicated ring closure reaction between the two acyclic compounds 1-deoxy-D-xylulose-5-phosphate (DXP) and 3-amino-2-oxopropyl phosphate (1-amino-acetone-3-phosphate or AAP) to form pyridoxine 5'-phosphate (PNP) and inorganic phosphate. This is Pyridoxine 5'-phosphate synthase from Campylobacter hominis (strain ATCC BAA-381 / DSM 21671 / CCUG 45161 / LMG 19568 / NCTC 13146 / CH001A).